We begin with the raw amino-acid sequence, 799 residues long: Valine--tRNA ligase (799 aa).

Position 536 (lysine 536) interacts with ATP.

This sequence belongs to the class-I aminoacyl-tRNA synthetase family. ValS type 2 subfamily.

It localises to the cytoplasm. The enzyme catalyses tRNA(Val) + L-valine + ATP = L-valyl-tRNA(Val) + AMP + diphosphate. Functionally, catalyzes the attachment of valine to tRNA(Val). As ValRS can inadvertently accommodate and process structurally similar amino acids such as threonine, to avoid such errors, it has a 'posttransfer' editing activity that hydrolyzes mischarged Thr-tRNA(Val) in a tRNA-dependent manner. This is Valine--tRNA ligase (valS) from Pyrobaculum aerophilum (strain ATCC 51768 / DSM 7523 / JCM 9630 / CIP 104966 / NBRC 100827 / IM2).